The primary structure comprises 365 residues: Succinyl-diaminopimelate desuccinylase (365 aa).

Position 64 (histidine 64) interacts with Zn(2+). The active site involves aspartate 66. Position 95 (aspartate 95) interacts with Zn(2+). The Proton acceptor role is filled by glutamate 125. Zn(2+) contacts are provided by glutamate 126, glutamate 154, and histidine 339.

The protein belongs to the peptidase M20A family. DapE subfamily. As to quaternary structure, homodimer. It depends on Zn(2+) as a cofactor. Co(2+) serves as cofactor.

The catalysed reaction is N-succinyl-(2S,6S)-2,6-diaminopimelate + H2O = (2S,6S)-2,6-diaminopimelate + succinate. It participates in amino-acid biosynthesis; L-lysine biosynthesis via DAP pathway; LL-2,6-diaminopimelate from (S)-tetrahydrodipicolinate (succinylase route): step 3/3. Its function is as follows. Catalyzes the hydrolysis of N-succinyl-L,L-diaminopimelic acid (SDAP), forming succinate and LL-2,6-diaminopimelate (DAP), an intermediate involved in the bacterial biosynthesis of lysine and meso-diaminopimelic acid, an essential component of bacterial cell walls. The sequence is that of Succinyl-diaminopimelate desuccinylase from Campylobacter curvus (strain 525.92).